Here is a 25-residue protein sequence, read N- to C-terminus: Hemocyanin subunit 2 (25 aa).

It belongs to the tyrosinase family. Hemocyanin subfamily. Hemolymph.

The protein localises to the secreted. It localises to the extracellular space. In terms of biological role, hemocyanins are copper-containing oxygen carriers occurring freely dissolved in the hemolymph of many mollusks and arthropods. The sequence is that of Hemocyanin subunit 2 from Carcinus maenas (Common shore crab).